The primary structure comprises 310 residues: tRNA uridine(34) hydroxylase (310 aa).

A Rhodanese domain is found at 124–218; that stretch reads SDPEVLLIDT…YFEEVPQEES (95 aa). Cys-178 acts as the Cysteine persulfide intermediate in catalysis.

Belongs to the TrhO family.

It carries out the reaction uridine(34) in tRNA + AH2 + O2 = 5-hydroxyuridine(34) in tRNA + A + H2O. Functionally, catalyzes oxygen-dependent 5-hydroxyuridine (ho5U) modification at position 34 in tRNAs. In Pseudomonas putida (strain ATCC 700007 / DSM 6899 / JCM 31910 / BCRC 17059 / LMG 24140 / F1), this protein is tRNA uridine(34) hydroxylase.